The following is a 70-amino-acid chain: Probable tautomerase RSp0893 (70 aa).

The active-site Proton acceptor; via imino nitrogen is the Pro2.

Belongs to the 4-oxalocrotonate tautomerase family.

The polypeptide is Probable tautomerase RSp0893 (Ralstonia nicotianae (strain ATCC BAA-1114 / GMI1000) (Ralstonia solanacearum)).